We begin with the raw amino-acid sequence, 303 residues long: MNPQELKSILSSGLLSFPVTDFNAQGDFHRAGYIKRLEWLAPYGASALFAAGGTGEFFSLAASEYSEIIKTAVDTCATSVPILAGVGGATRQAIEYAQEAERLGAKGLLLLPHYLTEASQDGVAAHVEAVCKSVKIGVVVYNRNVCRLTPTLLEQLAERCPNLIGYKDGLGDIELMVSIRRRLGDRFSYLGGLPTAEVYAAAYKALGVPVYSSAVFNFVPKLAMDFYHAIARDDHEAVGKYIDDFFLPYLEIRNRKAGYAVSIVKAGAKIAGYDAGPVRAPLTDLTPDECDMLAALMDKQGKQ.

The protein belongs to the DapA family.

The enzyme catalyses 5-dehydro-4-deoxy-D-glucarate + H(+) = 2,5-dioxopentanoate + CO2 + H2O. It functions in the pathway carbohydrate acid metabolism; D-glucarate degradation; 2,5-dioxopentanoate from D-glucarate: step 2/2. This chain is Probable 5-dehydro-4-deoxyglucarate dehydratase, found in Pseudomonas syringae pv. tomato (strain ATCC BAA-871 / DC3000).